Reading from the N-terminus, the 480-residue chain is Glycogen synthase (480 aa).

Position 15 (K15) interacts with ADP-alpha-D-glucose.

It belongs to the glycosyltransferase 1 family. Bacterial/plant glycogen synthase subfamily.

It carries out the reaction [(1-&gt;4)-alpha-D-glucosyl](n) + ADP-alpha-D-glucose = [(1-&gt;4)-alpha-D-glucosyl](n+1) + ADP + H(+). It participates in glycan biosynthesis; glycogen biosynthesis. Its function is as follows. Synthesizes alpha-1,4-glucan chains using ADP-glucose. In Rhizobium rhizogenes (strain K84 / ATCC BAA-868) (Agrobacterium radiobacter), this protein is Glycogen synthase.